The chain runs to 1004 residues: Sodium/potassium-transporting ATPase subunit alpha-B (1004 aa).

Transmembrane regions (helical) follow at residues 76 to 96 and 110 to 126; these read LFGG…LAYG and NLYL…VTGI. Residues 197–216 form a disordered region; that stretch reads SSLTGESEPQARSPEFTNDN. The next 2 membrane-spanning stretches (helical) occupy residues 272–294 and 301–329; these read FIHI…AFVL and AVVF…TLTA. The active-site 4-aspartylphosphate intermediate is the aspartate 357. Lysine 489 is a binding site for ATP. Mg(2+)-binding residues include aspartate 698 and aspartate 702. 4 helical membrane-spanning segments follow: residues 768–791, 828–855, 897–918, and 934–959; these read ISPF…ILCI, ERLI…VIMA, SSCH…LIIS, and ILNF…DKGL.

It belongs to the cation transport ATPase (P-type) (TC 3.A.3) family. Type IIC subfamily. As to quaternary structure, the sodium/potassium-transporting ATPase is composed of a catalytic alpha subunit, an auxiliary non-catalytic beta subunit and an additional regulatory subunit.

It is found in the cell membrane. It catalyses the reaction K(+)(out) + Na(+)(in) + ATP + H2O = K(+)(in) + Na(+)(out) + ADP + phosphate + H(+). Its function is as follows. This is the catalytic component of the active enzyme, which catalyzes the hydrolysis of ATP coupled with the exchange of sodium and potassium ions across the plasma membrane. This action creates the electrochemical gradient of sodium and potassium ions, providing the energy for active transport of various nutrients. This is Sodium/potassium-transporting ATPase subunit alpha-B from Artemia franciscana (Brine shrimp).